A 508-amino-acid chain; its full sequence is Aldehyde dehydrogenase family 7 member A1 (508 aa).

G244–G249 is a binding site for NAD(+). Residue E266 is the Proton acceptor of the active site. C300 functions as the Nucleophile in the catalytic mechanism.

The protein belongs to the aldehyde dehydrogenase family. Homotetramer.

The enzyme catalyses an aldehyde + NAD(+) + H2O = a carboxylate + NADH + 2 H(+). May play a role in fruit development. This chain is Aldehyde dehydrogenase family 7 member A1, found in Malus domestica (Apple).